A 726-amino-acid polypeptide reads, in one-letter code: Methionine--tRNA ligase (726 aa).

A 'HIGH' region motif is present at residues 12–22 (PYVNNIPHLGN). The Zn(2+) site is built by C143, C146, C155, and C158. A 'KMSKS' region motif is present at residues 330 to 334 (KFSKS). K333 is an ATP binding site. The region spanning 562 to 667 (FSEQICLKTV…DNPIPGERVI (106 aa)) is the tRNA-binding domain.

This sequence belongs to the class-I aminoacyl-tRNA synthetase family. MetG type 1 subfamily. As to quaternary structure, homodimer. Zn(2+) is required as a cofactor.

It localises to the cytoplasm. It catalyses the reaction tRNA(Met) + L-methionine + ATP = L-methionyl-tRNA(Met) + AMP + diphosphate. Is required not only for elongation of protein synthesis but also for the initiation of all mRNA translation through initiator tRNA(fMet) aminoacylation. The polypeptide is Methionine--tRNA ligase (Borrelia recurrentis (strain A1)).